A 238-amino-acid polypeptide reads, in one-letter code: Neuromodulin (238 aa).

The interval 1-238 (MLCCMRRTKQ…EEPEADQEHA (238 aa)) is disordered. S-palmitoyl cysteine attachment occurs at residues Cys3 and Cys4. A compositionally biased stretch (basic and acidic residues) spans 9 to 32 (KQVEKNDDDQKIEQDGIKPEDKAH). The IQ domain occupies 31-60 (AHKAATKIQASFRGHITRKKLKGEKKDDVQ). Residue Ser41 is modified to Phosphoserine; by PHK and PKC. Basic and acidic residues predominate over residues 54 to 83 (EKKDDVQAAEAEANKKDEAPVADGVEKKGE). Low complexity predominate over residues 84 to 95 (GTTTAEAAPATG). Residues 97-116 (KPDEPGKAGETPSEEKKGEG) are compositionally biased toward basic and acidic residues. The segment covering 119 to 130 (ATEQAAPQAPAS) has biased composition (low complexity). The span at 139-154 (ETESATKASTDNSPSS) shows a compositional bias: polar residues. A phosphoserine mark is found at Ser151, Ser153, and Ser154. The segment covering 155–167 (KAEDAPAKEEPKQ) has biased composition (basic and acidic residues). Residues 168 to 199 (ADVPAAVTAAAATTPAAEDAAAKATAQPPTET) show a composition bias toward low complexity. Thr181 bears the Phosphothreonine mark. Residues Ser202 and Ser203 each carry the phosphoserine; by CK2 modification. Over residues 213-225 (DETKPKESARQDE) the composition is skewed to basic and acidic residues. A compositionally biased stretch (acidic residues) spans 226-238 (GKEEEPEADQEHA).

Belongs to the neuromodulin family. In terms of assembly, identified in a complex containing FGFR4, NCAM1, CDH2, PLCG1, FRS2, SRC, SHC1, GAP43 and CTTN. Interacts (via IQ domain) with calmodulin. Binds calmodulin with a greater affinity in the absence of Ca(2+) than in its presence. Post-translationally, phosphorylated. Phosphorylation of this protein by a protein kinase C is specifically correlated with certain forms of synaptic plasticity. In terms of processing, palmitoylated by ZDHHC3. Palmitoylation is regulated by ARF6 and is essential for plasma membrane association and axonal and dendritic filopodia induction. Deacylated by LYPLA2.

The protein resides in the cell membrane. Its subcellular location is the cell projection. The protein localises to the growth cone membrane. It localises to the synapse. It is found in the filopodium membrane. The protein resides in the perikaryon. Its subcellular location is the dendrite. The protein localises to the axon. It localises to the cytoplasm. This protein is associated with nerve growth. It is a major component of the motile 'growth cones' that form the tips of elongating axons. Plays a role in axonal and dendritic filopodia induction. This is Neuromodulin (GAP43) from Homo sapiens (Human).